Consider the following 408-residue polypeptide: BTB/POZ and MATH domain-containing protein 3 (408 aa).

Residues 24-158 (NGSHQFTIQG…DDCLVINCTV (135 aa)) enclose the MATH domain. Residues 194–261 (CDIAFQVGDE…IYTDVLPNVH (68 aa)) form the BTB domain.

Belongs to the Tdpoz family. As to quaternary structure, homodimer or heterodimer with BPM3 and BPM5. Interacts with CUL3A and CUL3B. Interacts with RAP2-4 and RAP2-13. Binds to MYB56 at the promoter of FLOWERING LOCUS T (FT). In terms of tissue distribution, ubiquitous.

It localises to the nucleus. The protein localises to the cytoplasm. Its pathway is protein modification; protein ubiquitination. Its function is as follows. May act as a substrate-specific adapter of an E3 ubiquitin-protein ligase complex (CUL3-RBX1-BTB) which mediates the ubiquitination and subsequent proteasomal degradation of target proteins. The protein is BTB/POZ and MATH domain-containing protein 3 of Arabidopsis thaliana (Mouse-ear cress).